The sequence spans 101 residues: Small ribosomal subunit protein uS14 (101 aa).

Belongs to the universal ribosomal protein uS14 family. Part of the 30S ribosomal subunit. Contacts proteins S3 and S10.

In terms of biological role, binds 16S rRNA, required for the assembly of 30S particles and may also be responsible for determining the conformation of the 16S rRNA at the A site. This Alteromonas mediterranea (strain DSM 17117 / CIP 110805 / LMG 28347 / Deep ecotype) protein is Small ribosomal subunit protein uS14.